A 463-amino-acid polypeptide reads, in one-letter code: FAD-dependent monooxygenase str9 (463 aa).

Positions 37, 50, and 114 each coordinate FAD. The active site involves Arg-200. Asp-334 contributes to the FAD binding site.

Belongs to the paxM FAD-dependent monooxygenase family.

Its pathway is mycotoxin biosynthesis. FAD-dependent monooxygenase; part of the gene cluster that mediates the biosynthesis of strobilurin A, an antifungal polyketide that contains a key beta-methoxyacrylate toxophore that targets the complex III of the mitochondrial electron transport chain. Strobilurin biosynthesis begins with construction of benzoyl CoA by step-wise elimination of ammonia from phenylalanine by the phenylalanine ammonia-lyase str11, oxygenation by str8 and retro-Claisen reaction to form benzoic acid, which is activated to its CoA thiolester benzoyl CoA by the dedicated CoA ligase str10. Benzoyl CoA forms the starter unit for the highly reducing polyketide synthase stpks1 that produces the polyketide prestrobilutin A. The FAD-dependent oxygenase str9 then catalyzes the key oxidative rearrangement responsible for the creation of the beta-methoxyacrylate toxophore. Str9 performs epoxidation of the 2,3 olefin of prestrobilutin A, followed by Meinwald rearrangement to furnish the aldehyde intermediate. Rapid enolization of the aldehyde intermediate would give the beta-methoxyacrylate skeleton and methylations catalyzed by str2 and str3 complete the synthesis and lead to the production of strobilurin A. The short-chain dehydrogenase stl2 and the dehydrogenase str4 play a role in the shunt pathway leading to the production of bolineol. The cluster encodes no obvious halogenase gene that could be involved in production of strobilurin B, nor any obvious dimethylallyl-transferase that could be involved in the production of strobilurin G. It is possible that unknown proteins encoded in, or near, the cluster (such as str1 or stl1) may form new classes of halogenases or dimethylally-transferases, or that the responsible genes are located elsewhere on the genome. Similarly, proteins encoded by str5/str6 hydrolases appear to have no chemical role in the biosynthesis of strobilurin A. Finally, no obvious self-resistance gene is found within the cluster. This chain is FAD-dependent monooxygenase str9, found in Strobilurus tenacellus.